A 96-amino-acid chain; its full sequence is Citrate lyase acyl carrier protein (96 aa).

Ser-14 carries the post-translational modification O-(phosphoribosyl dephospho-coenzyme A)serine.

The protein belongs to the CitD family. Oligomer with a subunit composition of (alpha,beta,gamma)6.

It localises to the cytoplasm. In terms of biological role, covalent carrier of the coenzyme of citrate lyase. In Lactiplantibacillus plantarum (strain ATCC BAA-793 / NCIMB 8826 / WCFS1) (Lactobacillus plantarum), this protein is Citrate lyase acyl carrier protein.